The chain runs to 74 residues: Protein Vpu (74 aa).

Residues 1–4 (MLWL) are Extracellular-facing. Residues 5–25 (GFIALGVAIIIAAIIWVLLYK) form a helical membrane-spanning segment. The Cytoplasmic portion of the chain corresponds to 26–74 (EYKKIKLQEKIEQIRQKIRDRTEDRGKESDGDAEWLAILLSPDKLDNWV). The residue at position 54 (S54) is a Phosphoserine; by host CK2.

Belongs to the HIV-1 VPU protein family. As to quaternary structure, homopentamer. Interacts with host CD4 and BRTC; these interactions induce proteasomal degradation of CD4. Interacts with host BST2; this interaction leads to the degradation of host BST2. Interacts with host FBXW11. Interacts with host AP1M1; this interaction plays a role in the mistrafficking and subsequent degradation of host BST2. Interacts with host RANBP2; this interaction allows Vpu to down-regulate host BLM sumoylation. In terms of processing, phosphorylated by host CK2. This phosphorylation is necessary for interaction with human BTRC and degradation of CD4.

Its subcellular location is the host membrane. Its activity is regulated as follows. Ion channel activity is inhibited by hexamethylene amiloride in vitro. In terms of biological role, enhances virion budding by targeting host CD4 and Tetherin/BST2 to proteasome degradation. Degradation of CD4 prevents any unwanted premature interactions between viral Env and its host receptor CD4 in the endoplasmic reticulum. Degradation of antiretroviral protein Tetherin/BST2 is important for virion budding, as BST2 tethers new viral particles to the host cell membrane. Mechanistically, Vpu bridges either CD4 or BST2 to BTRC, a substrate recognition subunit of the Skp1/Cullin/F-box protein E3 ubiquitin ligase, induces their ubiquitination and subsequent proteasomal degradation. The alteration of the E3 ligase specificity by Vpu seems to promote the degradation of host IKBKB, leading to NF-kappa-B down-regulation and subsequent apoptosis. Acts as a viroporin that forms an oligomeric ion channel in membranes. Modulates the host DNA repair mechanisms to promote degradation of nuclear viral cDNA in cells that are already productively infected in order to suppress immune sensing and proviral hyper-integration (superinfection). Manipulates PML-NBs and modulates SUMOylation of host BLM protein thereby enhancing its DNA-end processing activity toward viral unintegrated linear DNA. Also inhibits RAD52-mediated homologous repair of viral cDNA, preventing the generation of dead-end circular forms of single copies of the long terminal repeat and permitting sustained nucleolytic attack. The protein is Protein Vpu of Human immunodeficiency virus type 1 group N (isolate YBF106) (HIV-1).